Here is a 230-residue protein sequence, read N- to C-terminus: DNA repair protein RecO (230 aa).

It belongs to the RecO family.

Functionally, involved in DNA repair and RecF pathway recombination. In Pseudoalteromonas translucida (strain TAC 125), this protein is DNA repair protein RecO.